The following is a 575-amino-acid chain: Acyloxyacyl hydrolase (575 aa).

Positions 1-23 are cleaved as a signal peptide; that stretch reads MQSPWKILTVAPLFLLLSLQSSA. The propeptide occupies 24–34; sequence SPANDDQSRPS. In terms of domain architecture, Saposin B-type spans 37-118; that stretch reads NGHTCVGCVL…HTLEFCKQNT (82 aa). Positions 38-70 are important for enzyme activity, localization to cytoplasmic vesicles, and protein stability; it reads GHTCVGCVLVVSVIEQLAQVHNSTVQASMERLC. Intrachain disulfides connect Cys41–Cys114, Cys44–Cys108, Cys70–Cys83, Cys123–Cys453, Cys160–Cys169, Cys206–Cys230, Cys249–Cys329, and Cys376–Cys459. N-linked (GlcNAc...) asparagine glycosylation is present at Asn59. Residues 173-177 form a lipopolysaccharide binding region; that stretch reads KLAME. Ca(2+) contacts are provided by Asp184, Asp186, Asp188, Tyr190, Asp205, Asn207, Asp208, Asp210, Val213, Asp223, Asp227, Asn229, Asn231, Ile233, and Glu245. Asn207 carries N-linked (GlcNAc...) asparagine glycosylation. Residue Ser263 is part of the active site. N-linked (GlcNAc...) asparagine glycosylation is found at Asn409 and Asn466.

As to quaternary structure, heterodimer of the large and small subunits; disulfide-linked. Ca(2+) serves as cofactor. Post-translationally, cleaved into a large and a small subunit. The small subunit is N-glycosylated.

It localises to the secreted. Its subcellular location is the cytoplasmic vesicle. The catalysed reaction is a 3-(acyloxy)acyl derivative of bacterial toxin + H2O = a 3-hydroxyacyl derivative of bacterial toxin + a fatty acid + H(+). Inhibited by EDTA. Its function is as follows. Removes the secondary (acyloxyacyl-linked) fatty acyl chains from the lipid A region of bacterial lipopolysaccharides. By breaking down LPS, terminates the host response to bacterial infection and prevents prolonged and damaging inflammatory responses. In peritoneal macrophages, seems to be important for recovery from a state of immune tolerance following infection by Gram-negative bacteria. In Homo sapiens (Human), this protein is Acyloxyacyl hydrolase.